The sequence spans 214 residues: MAEEVPSLNIEEWKPRTSIGSLVKEGKISSIKELFDRNLPITEPEIVDVLLPKLKYEVVDIKVVQKQTDAGEISRYKVLVIMGNMDGYVSIGTGKAKQLRVAIQKAIRDAKMNIIPVRRGCGSWQCTCGEPHSLPFKVVGKAGSVEVDLLPAPKGTGLVVGSVLKTLLTYAGIKDAWSTTKGETRTTENFVRAGYSALYNTYKFVTLQDWVRKR.

The region spanning 54-117 is the S5 DRBM domain; it reads LKYEVVDIKV…RDAKMNIIPV (64 aa).

The protein belongs to the universal ribosomal protein uS5 family. Part of the 30S ribosomal subunit. Contacts protein S4.

Functionally, with S4 and S12 plays an important role in translational accuracy. This is Small ribosomal subunit protein uS5 from Saccharolobus solfataricus (strain ATCC 35092 / DSM 1617 / JCM 11322 / P2) (Sulfolobus solfataricus).